Here is a 100-residue protein sequence, read N- to C-terminus: Urease subunit gamma (100 aa).

The protein belongs to the urease gamma subunit family. Heterotrimer of UreA (gamma), UreB (beta) and UreC (alpha) subunits. Three heterotrimers associate to form the active enzyme.

The protein localises to the cytoplasm. The enzyme catalyses urea + 2 H2O + H(+) = hydrogencarbonate + 2 NH4(+). The protein operates within nitrogen metabolism; urea degradation; CO(2) and NH(3) from urea (urease route): step 1/1. In Escherichia coli O157:H7 (strain EC4115 / EHEC), this protein is Urease subunit gamma.